Reading from the N-terminus, the 267-residue chain is RWD domain-containing protein 3 (267 aa).

Residues 7–114 (QELSALAAIF…LWIQQNLRLV (108 aa)) enclose the RWD domain. 2 interaction with UBE2I/UBC9 regions span residues 13-15 (AAI) and 100-102 (VHE).

In terms of assembly, interacts with UBE2I/UBC9, NFKBIA, HIF1A and NCOA2.

It is found in the nucleus. It localises to the cytoplasm. Its function is as follows. Enhancer of SUMO conjugation. Via its interaction with UBE2I/UBC9, increases SUMO conjugation to proteins by promoting the binding of E1 and E2 enzymes, thioester linkage between SUMO and UBE2I/UBC9 and transfer of SUMO to specific target proteins which include HIF1A, PIAS, NFKBIA, NR3C1 and TOP1. Positively regulates the NF-kappa-B signaling pathway by enhancing the sumoylation of NF-kappa-B inhibitor alpha (NFKBIA), promoting its stabilization which consequently leads to an increased inhibition of NF-kappa-B transcriptional activity. Negatively regulates the hypoxia-inducible factor-1 alpha (HIF1A) signaling pathway by increasing the sumoylation of HIF1A, promoting its stabilization, transcriptional activity and the expression of its target gene VEGFA during hypoxia. Has no effect on ubiquitination. This is RWD domain-containing protein 3 (Rwdd3) from Mus musculus (Mouse).